The chain runs to 154 residues: MAKNRVEKITERLVMPIIQNENFELVDLEYKKEGSNWYLRIYIDKPGGITLDDCQKVSEQLGEELDREDPISENYFLEVSSPGLDRPLKKDSDFIRFAGEIVEVKLYEALNGNKVIEGELVGLEENMIKINVANVGLLELPKEKVALTRLAVKF.

This sequence belongs to the RimP family.

The protein localises to the cytoplasm. Required for maturation of 30S ribosomal subunits. The sequence is that of Ribosome maturation factor RimP from Alkaliphilus oremlandii (strain OhILAs) (Clostridium oremlandii (strain OhILAs)).